A 488-amino-acid chain; its full sequence is Bifunctional protein HldE (488 aa).

The ribokinase stretch occupies residues 1 to 332 (MRESFLDTIQ…QELQSQQSAA (332 aa)). 208–211 (NKRE) lines the ATP pocket. The active site involves aspartate 277. The segment at 359–488 (FTNGCFDLLH…TSNIIRKLAS (130 aa)) is cytidylyltransferase.

It in the N-terminal section; belongs to the carbohydrate kinase PfkB family. This sequence in the C-terminal section; belongs to the cytidylyltransferase family. As to quaternary structure, homodimer.

The catalysed reaction is D-glycero-beta-D-manno-heptose 7-phosphate + ATP = D-glycero-beta-D-manno-heptose 1,7-bisphosphate + ADP + H(+). It carries out the reaction D-glycero-beta-D-manno-heptose 1-phosphate + ATP + H(+) = ADP-D-glycero-beta-D-manno-heptose + diphosphate. It functions in the pathway nucleotide-sugar biosynthesis; ADP-L-glycero-beta-D-manno-heptose biosynthesis; ADP-L-glycero-beta-D-manno-heptose from D-glycero-beta-D-manno-heptose 7-phosphate: step 1/4. The protein operates within nucleotide-sugar biosynthesis; ADP-L-glycero-beta-D-manno-heptose biosynthesis; ADP-L-glycero-beta-D-manno-heptose from D-glycero-beta-D-manno-heptose 7-phosphate: step 3/4. Functionally, catalyzes the phosphorylation of D-glycero-D-manno-heptose 7-phosphate at the C-1 position to selectively form D-glycero-beta-D-manno-heptose-1,7-bisphosphate. Its function is as follows. Catalyzes the ADP transfer from ATP to D-glycero-beta-D-manno-heptose 1-phosphate, yielding ADP-D-glycero-beta-D-manno-heptose. This Methylobacillus flagellatus (strain ATCC 51484 / DSM 6875 / VKM B-1610 / KT) protein is Bifunctional protein HldE.